A 434-amino-acid polypeptide reads, in one-letter code: Vi polysaccharide export inner-membrane protein VexD (434 aa).

Residues 1–50 (MENSERIKKWKEERAKVAQESRASRLQQKEDERALRQTEKSADAKSHHNP) are compositionally biased toward basic and acidic residues. The interval 1–58 (MENSERIKKWKEERAKVAQESRASRLQQKEDERALRQTEKSADAKSHHNPDAGWSATD) is disordered. Helical transmembrane passes span 84–104 (LFLY…ILTS) and 409–429 (WLLF…LITI).

It belongs to the BexC/CtrB/KpsE family.

The protein localises to the cell inner membrane. In terms of biological role, may form an ATP-driven capsule polysaccharide export apparatus, in association with the VexA, VexB and VexC proteins. This is Vi polysaccharide export inner-membrane protein VexD (vexD) from Salmonella typhi.